The chain runs to 128 residues: Ribosome-binding factor A (128 aa).

It belongs to the RbfA family. In terms of assembly, monomer. Binds 30S ribosomal subunits, but not 50S ribosomal subunits or 70S ribosomes.

The protein resides in the cytoplasm. Functionally, one of several proteins that assist in the late maturation steps of the functional core of the 30S ribosomal subunit. Associates with free 30S ribosomal subunits (but not with 30S subunits that are part of 70S ribosomes or polysomes). Required for efficient processing of 16S rRNA. May interact with the 5'-terminal helix region of 16S rRNA. This chain is Ribosome-binding factor A, found in Acidithiobacillus ferrooxidans (strain ATCC 23270 / DSM 14882 / CIP 104768 / NCIMB 8455) (Ferrobacillus ferrooxidans (strain ATCC 23270)).